A 616-amino-acid polypeptide reads, in one-letter code: Protein decapentaplegic (616 aa).

Residues 1–23 (MRAWILLLAVLATSQPIVQVAST) form the signal peptide. The propeptide occupies 24-474 (EDTSISQRFI…DGRHKARSIR (451 aa)). A disordered region spans residues 80–188 (SDSDSDNNNN…TSTESHQSPI (109 aa)). The segment covering 86–105 (NNNNNYKNRNNNNNNLNKGP) has biased composition (low complexity). Residues 106–115 (RNNKNKGNKH) show a composition bias toward basic residues. Basic and acidic residues predominate over residues 116–139 (SKSDANRQFNEVHKPRTDQLENSK). N-linked (GlcNAc...) asparagine glycosylation occurs at Asn-147. Over residues 173 to 188 (ATTTALTSTESHQSPI) the composition is skewed to polar residues. N-linked (GlcNAc...) asparagine glycans are attached at residues Asn-360 and Asn-395. The segment at 470–512 (ARSIRDVSGGGGGGGGAGEGGKGNGGGRNRRHQRRPARRKNHE) is disordered. Residues 477–496 (SGGGGGGGGAGEGGKGNGGG) are compositionally biased toward gly residues. The segment covering 497–509 (RNRRHQRRPARRK) has biased composition (basic residues). 3 disulfide bridges follow: Cys-515–Cys-581, Cys-544–Cys-613, and Cys-548–Cys-615. Asn-557 carries an N-linked (GlcNAc...) asparagine glycan.

This sequence belongs to the TGF-beta family. As to quaternary structure, heterodimers of scw/dpp are the active subunit, dpp/dpp homodimers elicit a basal response and scw/scw homodimers alone are ineffective in specifying a dorsal pattern. As to expression, expressed in the imaginal discs associated with establishment of the proximal-distal axis of the appendages, and midgut mesoderm.

The protein localises to the secreted. Its function is as follows. Acts as an extracellular morphogen to establish at least two cellular response thresholds within the dorsal half of the drosophila embryo. Required for the proper development of the embryonic dorsal hypoderm, for viability of larvae and for cell viability of the epithelial cells in the imaginal disks. Acts together with scw. This Drosophila pseudoobscura pseudoobscura (Fruit fly) protein is Protein decapentaplegic (dpp).